We begin with the raw amino-acid sequence, 859 residues long: Mismatch repair endonuclease PMS2 (859 aa).

ATP-binding residues include asparagine 45, aspartate 70, glutamate 109, alanine 110, and leucine 111. 3 disordered regions span residues 391–413 (ELEK…ADEK), 427–455 (LHPT…RGVL), and 469–555 (RGSQ…KPED). Basic and acidic residues-rich tracts occupy residues 427-439 (LHPT…RGPE) and 485-495 (CMDREKIEKDS). Residues 512–525 (EVASSFSSDYNVSS) show a composition bias toward polar residues. Positions 574 to 577 (KRFK) match the Nuclear localization signal motif. A disordered region spans residues 578 to 597 (TEERPSNVNISQRLPGPQST). The segment covering 583 to 597 (SNVNISQRLPGPQST) has biased composition (polar residues).

The protein belongs to the DNA mismatch repair MutL/HexB family. Heterodimer of PMS2 and MLH1 (MutL alpha); this interaction is required for the stability of both partners. Forms a ternary complex with MutS alpha (MSH2-MSH6) or MutS beta (MSH2-MSH3). Part of the BRCA1-associated genome surveillance complex (BASC), which contains BRCA1, MSH2, MSH6, MLH1, ATM, BLM, PMS2 and the RAD50-MRE11-NBS1 protein complex. This association could be a dynamic process changing throughout the cell cycle and within subnuclear domains. Interacts with MTMR15/FAN1.

The protein localises to the nucleus. It catalyses the reaction ATP + H2O = ADP + phosphate + H(+). Functionally, component of the post-replicative DNA mismatch repair system (MMR). Heterodimerizes with MLH1 to form MutL alpha. DNA repair is initiated by MutS alpha (MSH2-MSH6) or MutS beta (MSH2-MSH3) binding to a dsDNA mismatch, then MutL alpha is recruited to the heteroduplex. Assembly of the MutL-MutS-heteroduplex ternary complex in presence of RFC and PCNA is sufficient to activate endonuclease activity of PMS2. It introduces single-strand breaks near the mismatch and thus generates new entry points for the exonuclease EXO1 to degrade the strand containing the mismatch. DNA methylation would prevent cleavage and therefore assure that only the newly mutated DNA strand is going to be corrected. MutL alpha (MLH1-PMS2) interacts physically with the clamp loader subunits of DNA polymerase III, suggesting that it may play a role to recruit the DNA polymerase III to the site of the MMR. Also implicated in DNA damage signaling, a process which induces cell cycle arrest and can lead to apoptosis in case of major DNA damages. Possesses an ATPase activity, but in the absence of gross structural changes, ATP hydrolysis may not be necessary for proficient mismatch repair. The sequence is that of Mismatch repair endonuclease PMS2 from Mus musculus (Mouse).